Here is an 890-residue protein sequence, read N- to C-terminus: Protein FAM171A1 (890 aa).

Positions 1–21 are cleaved as a signal peptide; it reads MSRSATLLLCLLGCHVWKAVT. The Extracellular segment spans residues 22–303; that stretch reads KTLREPGAGA…VTQDITTYHT (282 aa). N-linked (GlcNAc...) asparagine glycans are attached at residues asparagine 159, asparagine 190, and asparagine 194. Residues 304–324 form a helical membrane-spanning segment; sequence VFLLAILGGMAFILLVLLCLL. Topologically, residues 325-890 are cytoplasmic; that stretch reads LYYCRRKCLK…ERPLMAFNIK (566 aa). Phosphoserine occurs at positions 358, 360, 371, 422, 443, and 525. 2 disordered regions span residues 730 to 759 and 818 to 890; these read AGRNGSNDASLDSGVDMNEPKSARKGRGDA and EGSS…FNIK. A compositionally biased stretch (basic and acidic residues) spans 747–757; the sequence is NEPKSARKGRG. A compositionally biased stretch (polar residues) spans 822-833; that stretch reads RRSGGQLPSLQE. A phosphoserine mark is found at serine 849 and serine 855. Over residues 858-869 the composition is skewed to acidic residues; the sequence is EEEEDDDDDDQG. The segment covering 870–883 has biased composition (basic and acidic residues); that stretch reads EDKKSPWQKREERP.

Belongs to the FAM171 family. Interacts with ADAM10, NSG1 and OAZ1. In terms of tissue distribution, expressed in heart, brain, liver, skeletal muscle, kidney and pancreas. In brain, expressed by glia, pyramidal neurons and astrocytes (at protein level). Highly expressed in placental trophoblasts.

Its subcellular location is the cell membrane. In terms of biological role, involved in the regulation of the cytoskeletal dynamics, plays a role in actin stress fiber formation. The chain is Protein FAM171A1 from Homo sapiens (Human).